Here is a 181-residue protein sequence, read N- to C-terminus: uncharacterized protein (181 aa).

It to M.pneumoniae MPN_635 C-terminal region.

This is an uncharacterized protein from Mycoplasma pneumoniae (strain ATCC 29342 / M129 / Subtype 1) (Mycoplasmoides pneumoniae).